The sequence spans 202 residues: Glycerol-3-phosphate acyltransferase (202 aa).

5 helical membrane passes run 3–23, 87–107, 118–138, 144–164, and 167–187; these read NLIIYAFIYLLSSIPFGLILA, LLWSVAVLAILGHCFSIYLLF, GAMIVLLPLEVLTAFIVWVVI, ISSLASLAALLAFVVSSFIFN, and LEIHTHAPVFIIAFIIVYKHL.

The protein belongs to the PlsY family. Probably interacts with PlsX.

It localises to the cell inner membrane. It catalyses the reaction an acyl phosphate + sn-glycerol 3-phosphate = a 1-acyl-sn-glycero-3-phosphate + phosphate. It functions in the pathway lipid metabolism; phospholipid metabolism. Catalyzes the transfer of an acyl group from acyl-phosphate (acyl-PO(4)) to glycerol-3-phosphate (G3P) to form lysophosphatidic acid (LPA). This enzyme utilizes acyl-phosphate as fatty acyl donor, but not acyl-CoA or acyl-ACP. This is Glycerol-3-phosphate acyltransferase from Campylobacter jejuni (strain RM1221).